The chain runs to 292 residues: uncharacterized protein (292 aa).

This sequence belongs to the glycosyltransferase 2 family. WaaE/KdtX subfamily.

This is an uncharacterized protein from Rickettsia typhi (strain ATCC VR-144 / Wilmington).